The following is a 407-amino-acid chain: Schlafen-like protein 1 (407 aa).

Disordered regions lie at residues 1 to 28 and 137 to 191; these read MTPM…LPEL and AQGP…CQGR. A compositionally biased stretch (low complexity) spans 155–167; the sequence is GLSPGPSPGSGVP. Residues 181–190 show a composition bias toward polar residues; it reads QAQQLQSCQG. 261-268 contacts ATP; sequence GVEDSGLV. Residues 366–398 are a coiled coil; it reads RQRWLVELGKLEEKMKALMMEKEQLQQQLQQHG.

Belongs to the Schlafen family. Subgroup I subfamily.

This chain is Schlafen-like protein 1 (SLFNL1), found in Homo sapiens (Human).